A 461-amino-acid chain; its full sequence is Bifunctional protein GlmU (461 aa).

The segment at 1–227 is pyrophosphorylase; that stretch reads MEVIALILAA…PDEVLGVNDR (227 aa). Residues 8–11, lysine 22, glutamine 73, 78–79, 100–102, glycine 137, glutamate 152, asparagine 167, and asparagine 225 contribute to the UDP-N-acetyl-alpha-D-glucosamine site; these read LAAG, GT, and YGD. Aspartate 102 lines the Mg(2+) pocket. Asparagine 225 contributes to the Mg(2+) binding site. The linker stretch occupies residues 228 to 248; it reads RQLAELERIYQVHQARALMER. The tract at residues 249 to 461 is N-acetyltransferase; the sequence is GVTLRDPARF…EKARKESCAE (213 aa). UDP-N-acetyl-alpha-D-glucosamine is bound by residues arginine 332 and lysine 350. The active-site Proton acceptor is histidine 362. Residues tyrosine 365 and asparagine 376 each contribute to the UDP-N-acetyl-alpha-D-glucosamine site. Acetyl-CoA contacts are provided by residues alanine 379, 385-386, serine 404, alanine 422, and arginine 439; that span reads NY.

In the N-terminal section; belongs to the N-acetylglucosamine-1-phosphate uridyltransferase family. This sequence in the C-terminal section; belongs to the transferase hexapeptide repeat family. In terms of assembly, homotrimer. Mg(2+) is required as a cofactor.

Its subcellular location is the cytoplasm. It catalyses the reaction alpha-D-glucosamine 1-phosphate + acetyl-CoA = N-acetyl-alpha-D-glucosamine 1-phosphate + CoA + H(+). It carries out the reaction N-acetyl-alpha-D-glucosamine 1-phosphate + UTP + H(+) = UDP-N-acetyl-alpha-D-glucosamine + diphosphate. The protein operates within nucleotide-sugar biosynthesis; UDP-N-acetyl-alpha-D-glucosamine biosynthesis; N-acetyl-alpha-D-glucosamine 1-phosphate from alpha-D-glucosamine 6-phosphate (route II): step 2/2. It functions in the pathway nucleotide-sugar biosynthesis; UDP-N-acetyl-alpha-D-glucosamine biosynthesis; UDP-N-acetyl-alpha-D-glucosamine from N-acetyl-alpha-D-glucosamine 1-phosphate: step 1/1. Its pathway is bacterial outer membrane biogenesis; LPS lipid A biosynthesis. Functionally, catalyzes the last two sequential reactions in the de novo biosynthetic pathway for UDP-N-acetylglucosamine (UDP-GlcNAc). The C-terminal domain catalyzes the transfer of acetyl group from acetyl coenzyme A to glucosamine-1-phosphate (GlcN-1-P) to produce N-acetylglucosamine-1-phosphate (GlcNAc-1-P), which is converted into UDP-GlcNAc by the transfer of uridine 5-monophosphate (from uridine 5-triphosphate), a reaction catalyzed by the N-terminal domain. This Methylococcus capsulatus (strain ATCC 33009 / NCIMB 11132 / Bath) protein is Bifunctional protein GlmU.